Consider the following 560-residue polypeptide: MARSRSISGYGIWKYLNPAYYLRRPRRLALLFIVFVSVSMLVWDRINLAREHEVEVFKLNEEVSRLEQMLEELNGGVGNKPLKTLKDAPEDPVDKQRRQKVKEAMIHAWSSYEKYAWGKDELQPRTKDGTDSFGGLGATMVDSLDTLYIMGLDEQFQKAREWVASSLDFDKDYDASMFETTIRVVGGLLSAYDLSGDKMFLEKAKDIADRLLPAWNTPTGIPYNIINLRNGNAHNPSWAAGGDSILADSGTEQLEFIALSQRTGDPKYQQKVEKVITELNKNFPADGLLPIYINPDNANPSYSTTTFGAMGDSFYEYLLKVWVQGNKTSAVKPYRDMWEKSMKGLLSLVKKSTPSSFTYICEKNGNNLIDKMDELACFAPGMLALGASGYGPDEEKKFLSLAGELAWTCYNFYQSTPTKLAGENYFFTAGQDMSVGTSWNILRPETVESLFYLWRLTGNKTYQEWGWNIFQAFEKNSRVESGYVGLKDVNTGAKDNKMQSFFLAETLKYLYLLFSPSSVISLDEWVFNTEAHPLKIVARNDPRKPTIALRQRKFGHQINV.

The Cytoplasmic segment spans residues 1-27; sequence MARSRSISGYGIWKYLNPAYYLRRPRR. A helical; Signal-anchor for type II membrane protein transmembrane segment spans residues 28–47; it reads LALLFIVFVSVSMLVWDRIN. Residues 47–80 adopt a coiled-coil conformation; sequence NLAREHEVEVFKLNEEVSRLEQMLEELNGGVGNK. Residues 48–560 are Lumenal-facing; the sequence is LAREHEVEVF…QRKFGHQINV (513 aa). Glutamate 179 serves as the catalytic Proton donor. Aspartate 312 is a catalytic residue. The N-linked (GlcNAc...) asparagine glycan is linked to asparagine 326. A disulfide bond links cysteine 377 and cysteine 409. Residue glutamate 423 is the Proton donor of the active site. The active site involves glutamate 445. Asparagine 459 is a glycosylation site (N-linked (GlcNAc...) asparagine). Threonine 529 is a Ca(2+) binding site.

It belongs to the glycosyl hydrolase 47 family. The cofactor is Ca(2+). It depends on Mn(2+) as a cofactor. Requires Mg(2+) as cofactor. In terms of tissue distribution, expressed in flowers, siliques, stems, leaves, roots, pollen grains, shoot apical meristems, hypocotyls and upper region of the root.

The protein resides in the golgi apparatus membrane. It carries out the reaction N(4)-(alpha-D-Man-(1-&gt;2)-alpha-D-Man-(1-&gt;2)-alpha-D-Man-(1-&gt;3)-[alpha-D-Man-(1-&gt;2)-alpha-D-Man-(1-&gt;3)-[alpha-D-Man-(1-&gt;2)-alpha-D-Man-(1-&gt;6)]-alpha-D-Man-(1-&gt;6)]-beta-D-Man-(1-&gt;4)-beta-D-GlcNAc-(1-&gt;4)-beta-D-GlcNAc)-L-asparaginyl-[protein] (N-glucan mannose isomer 9A1,2,3B1,2,3) + 4 H2O = N(4)-(alpha-D-Man-(1-&gt;3)-[alpha-D-Man-(1-&gt;3)-[alpha-D-Man-(1-&gt;6)]-alpha-D-Man-(1-&gt;6)]-beta-D-Man-(1-&gt;4)-beta-D-GlcNAc-(1-&gt;4)-beta-D-GlcNAc)-L-asparaginyl-[protein] (N-glucan mannose isomer 5A1,2) + 4 beta-D-mannose. It catalyses the reaction N(4)-(alpha-D-Man-(1-&gt;2)-alpha-D-Man-(1-&gt;2)-alpha-D-Man-(1-&gt;3)-[alpha-D-Man-(1-&gt;3)-[alpha-D-Man-(1-&gt;2)-alpha-D-Man-(1-&gt;6)]-alpha-D-Man-(1-&gt;6)]-beta-D-Man-(1-&gt;4)-beta-D-GlcNAc-(1-&gt;4)-beta-D-GlcNAc)-L-asparaginyl-[protein] (N-glucan mannose isomer 8A1,2,3B1,3) + 3 H2O = N(4)-(alpha-D-Man-(1-&gt;3)-[alpha-D-Man-(1-&gt;3)-[alpha-D-Man-(1-&gt;6)]-alpha-D-Man-(1-&gt;6)]-beta-D-Man-(1-&gt;4)-beta-D-GlcNAc-(1-&gt;4)-beta-D-GlcNAc)-L-asparaginyl-[protein] (N-glucan mannose isomer 5A1,2) + 3 beta-D-mannose. The enzyme catalyses N(4)-(alpha-D-Man-(1-&gt;2)-alpha-D-Man-(1-&gt;2)-alpha-D-Man-(1-&gt;3)-[alpha-D-Man-(1-&gt;2)-alpha-D-Man-(1-&gt;3)-[alpha-D-Man-(1-&gt;2)-alpha-D-Man-(1-&gt;6)]-alpha-D-Man-(1-&gt;6)]-beta-D-Man-(1-&gt;4)-beta-D-GlcNAc-(1-&gt;4)-beta-D-GlcNAc)-L-asparaginyl-[protein] (N-glucan mannose isomer 9A1,2,3B1,2,3) + H2O = N(4)-(alpha-D-Man-(1-&gt;2)-alpha-D-Man-(1-&gt;2)-alpha-D-Man-(1-&gt;3)-[alpha-D-Man-(1-&gt;3)-[alpha-D-Man-(1-&gt;2)-alpha-D-Man-(1-&gt;6)]-alpha-D-Man-(1-&gt;6)]-beta-D-Man-(1-&gt;4)-beta-D-GlcNAc-(1-&gt;4)-beta-D-GlcNAc)-L-asparaginyl-[protein] (N-glucan mannose isomer 8A1,2,3B1,3) + beta-D-mannose. It functions in the pathway protein modification; protein glycosylation. With respect to regulation, inhibited by kifunensine and 1-deoxymannojirimycin, but not by swainsonine. Class I alpha-mannosidase essential for early N-glycan processing. Progressively trims alpha-1,2-linked mannose residues. Produces Man(5)GlcNAc(2) from Man(8)GlcNAc(2), but only Man(6)GlcNAc(2) from Man(9)GlcNAc(2). Has difficulty acting on the terminal mannose of the b-branch. Involved in root development and cell wall biosynthesis. In Arabidopsis thaliana (Mouse-ear cress), this protein is Mannosyl-oligosaccharide 1,2-alpha-mannosidase MNS1 (MNS1).